We begin with the raw amino-acid sequence, 291 residues long: Small ribosomal subunit biogenesis GTPase RsgA (291 aa).

In terms of domain architecture, CP-type G spans 63–221; the sequence is ENELKRPPVS…IADTPGFSAL (159 aa). GTP contacts are provided by residues 112 to 115 and 164 to 172; these read TKKD and GQSGVGKST. Zn(2+) contacts are provided by Cys-245, Cys-250, His-252, and Cys-258.

This sequence belongs to the TRAFAC class YlqF/YawG GTPase family. RsgA subfamily. In terms of assembly, monomer. Associates with 30S ribosomal subunit, binds 16S rRNA. Zn(2+) is required as a cofactor.

The protein localises to the cytoplasm. One of several proteins that assist in the late maturation steps of the functional core of the 30S ribosomal subunit. Helps release RbfA from mature subunits. May play a role in the assembly of ribosomal proteins into the subunit. Circularly permuted GTPase that catalyzes slow GTP hydrolysis, GTPase activity is stimulated by the 30S ribosomal subunit. The chain is Small ribosomal subunit biogenesis GTPase RsgA from Staphylococcus aureus (strain COL).